Consider the following 425-residue polypeptide: Serine--tRNA ligase (425 aa).

231–233 (TAE) contacts L-serine. 262–264 (RSE) lines the ATP pocket. Residue E285 coordinates L-serine. Position 349–352 (349–352 (EISS)) interacts with ATP. Residue S385 participates in L-serine binding.

This sequence belongs to the class-II aminoacyl-tRNA synthetase family. Type-1 seryl-tRNA synthetase subfamily. In terms of assembly, homodimer. The tRNA molecule binds across the dimer.

It localises to the cytoplasm. It carries out the reaction tRNA(Ser) + L-serine + ATP = L-seryl-tRNA(Ser) + AMP + diphosphate + H(+). The catalysed reaction is tRNA(Sec) + L-serine + ATP = L-seryl-tRNA(Sec) + AMP + diphosphate + H(+). Its pathway is aminoacyl-tRNA biosynthesis; selenocysteinyl-tRNA(Sec) biosynthesis; L-seryl-tRNA(Sec) from L-serine and tRNA(Sec): step 1/1. Functionally, catalyzes the attachment of serine to tRNA(Ser). Is also able to aminoacylate tRNA(Sec) with serine, to form the misacylated tRNA L-seryl-tRNA(Sec), which will be further converted into selenocysteinyl-tRNA(Sec). The sequence is that of Serine--tRNA ligase from Bacillus licheniformis (strain ATCC 14580 / DSM 13 / JCM 2505 / CCUG 7422 / NBRC 12200 / NCIMB 9375 / NCTC 10341 / NRRL NRS-1264 / Gibson 46).